The sequence spans 536 residues: MLIEERLLTLFKRNCQHTLTYWSVFFSFGLSIAFLGPTILDLKCRTGSTLQEITWVFFAQQLCLLIGSSSGGAFTKTLFSALLALFLSSLIISVVFSIIPLCYNVLLLAIAMAVSGLAMGIIDTIANIQLVSIYKKDSPIFLQALHFFIGLGALLSPLIAEPFISGHCLRSNSTENATEIIHHFRSSFRSPVNLPESSPLSGPVEERNVSYAFWIMALINLPVPIAVFVLMYQEKLLPFCPNSSPRLLDKDELAMETKAPDNTEMAELDDEVFLHSGHGNIFSCCTDGALRGLPVTFFLIHIFGGMVLFMTEGIMGVYAGFVYTYAVSPPMSLQSKMAGNLNCIFWAAITAGRLVSIPLSYRFKTVHLLLTNMAGVIVTLLLLMILYTNRVFLFVGTTFLGLFISSVFPCLVAYTEDILEYRGCATTVLVTLSGMGEMTLQVLAGTLIQKKGSYSFLVCGLVIGCLGFIFLLSVILSNHFHRKITGASKKAEITDGPAAPAPEKTAPEHKTAVIQPECIKCDFGLDHNGSKPAENT.

12 helical membrane-spanning segments follow: residues 19-39, 53-73, 81-101, 105-125, 140-160, 211-231, 297-317, 341-361, 366-386, 391-411, 428-448, and 456-476; these read LTYW…GPTI, ITWV…SGGA, ALLA…IIPL, VLLL…IDTI, IFLQ…PLIA, YAFW…FVLM, FFLI…IMGV, LNCI…PLSY, VHLL…LMIL, VFLF…FPCL, VLVT…GTLI, and FLVC…SVIL.

Belongs to the major facilitator superfamily.

It localises to the membrane. The polypeptide is Major facilitator superfamily domain-containing protein 4B (Danio rerio (Zebrafish)).